An 82-amino-acid chain; its full sequence is ATP synthase subunit c (82 aa).

2 consecutive transmembrane segments (helical) span residues 7-27 (AASVVAAGLAVGLGAIGPGIG) and 57-77 (FAFMESLTIYGLVVALVLLFA).

It belongs to the ATPase C chain family. In terms of assembly, F-type ATPases have 2 components, F(1) - the catalytic core - and F(0) - the membrane proton channel. F(1) has five subunits: alpha(3), beta(3), gamma(1), delta(1), epsilon(1). F(0) has four main subunits: a(1), b(1), b'(1) and c(10-14). The alpha and beta chains form an alternating ring which encloses part of the gamma chain. F(1) is attached to F(0) by a central stalk formed by the gamma and epsilon chains, while a peripheral stalk is formed by the delta, b and b' chains.

It localises to the cellular thylakoid membrane. F(1)F(0) ATP synthase produces ATP from ADP in the presence of a proton or sodium gradient. F-type ATPases consist of two structural domains, F(1) containing the extramembraneous catalytic core and F(0) containing the membrane proton channel, linked together by a central stalk and a peripheral stalk. During catalysis, ATP synthesis in the catalytic domain of F(1) is coupled via a rotary mechanism of the central stalk subunits to proton translocation. Functionally, key component of the F(0) channel; it plays a direct role in translocation across the membrane. A homomeric c-ring of between 10-14 subunits forms the central stalk rotor element with the F(1) delta and epsilon subunits. In Prochlorococcus marinus (strain MIT 9303), this protein is ATP synthase subunit c.